The following is a 76-amino-acid chain: YRIASSSIAKMKTAVFLVGLLFLGLVFADEAAIDSEFDQSIDKRGCIATGSFCTLSKGCCTKNCGWNFKCNPPNQK.

Positions 1–28 (YRIASSSIAKMKTAVFLVGLLFLGLVFA) are cleaved as a signal peptide. Positions 29–44 (DEAAIDSEFDQSIDKR) are excised as a propeptide. 3 cysteine pairs are disulfide-bonded: cysteine 46–cysteine 60, cysteine 53–cysteine 64, and cysteine 59–cysteine 70. 2 positions are modified to 4-hydroxyproline: proline 72 and proline 73.

Belongs to the nemertide family. Confined to the epidermis and to the mucus layer.

It is found in the secreted. Functionally, highly potent toxin against insect sodium channel (Nav) and with less potent activity against mammalian sodium channels. Potently inhibits inactivation of insect sodium channels of B.germanica (BgNav1) (EC(50)=8.6 nM), D.melanogaster (Dm Nav1), and arachnid sodium channel V.destructor (VdNav1). Also delays the inactivation of most mammalian Nav channels tested (human Nav1.1/SCN1A; EC(50)=124.1 nM, rat Nav1.2/SCN2A; EC(50)=359.6 nM, rat Nav1.3/SCN3A; EC(50)=135.4 nM, rat Nav1.4/SCN4A; EC(50)=145.5 nM, human Nav1.5/SCN5A; EC(50)=138.3 nM, mouse Nav1.6/SCN8A; EC(50)=240.4 nM, human Nav1.9/SCN9A; EC(50)=76.5 nM). 1 uM is enough to completely inhibits the inactivation, resulting in sustained non-inactivating currents. In addition, the toxin significantly enhances the recovery from inactivation, and the open state is not required for the toxin to interact with the channel. In vivo, injection into green crabs (Carcinus maenas at 1 mug/kg) of small doses (1-5 ug/kg) results in slow and fast permanent paralysis, whereas injection of high doses (more than 10 ug/kg) causes death. Injection into juvenile Blaptica dubia cockroaches results in death or permanent paralysis at doses higher than 7.1 ug/kg. Injection into brine shrimp (Artemia salina) stops movement or causes death after 24 hours (EC(50)=0.3 uM). In the rare inherited cardiac arrhythmia Brugada syndrome 1 (BRGDA1), this toxin is able to restore the loss of function by reducing channel inactivation, without affecting activation, by binding to Nav1.5/SCN5A. The protein is Nemertide alpha-1 of Lineus lacteus (Ribbon worm).